The primary structure comprises 141 residues: Nucleoside diphosphate kinase (141 aa).

ATP-binding residues include Lys11, Phe59, Arg87, Thr93, Arg104, and Asn114. His117 serves as the catalytic Pros-phosphohistidine intermediate.

Belongs to the NDK family. In terms of assembly, homotetramer. The cofactor is Mg(2+).

Its subcellular location is the cytoplasm. It catalyses the reaction a 2'-deoxyribonucleoside 5'-diphosphate + ATP = a 2'-deoxyribonucleoside 5'-triphosphate + ADP. The catalysed reaction is a ribonucleoside 5'-diphosphate + ATP = a ribonucleoside 5'-triphosphate + ADP. In terms of biological role, major role in the synthesis of nucleoside triphosphates other than ATP. The ATP gamma phosphate is transferred to the NDP beta phosphate via a ping-pong mechanism, using a phosphorylated active-site intermediate. This Pseudomonas putida (strain GB-1) protein is Nucleoside diphosphate kinase.